Reading from the N-terminus, the 513-residue chain is Sterol 14-alpha demethylase (513 aa).

Residues 8–28 traverse the membrane as a helical segment; the sequence is AYALLAFVAIMALNVTYQFLF. N-linked (GlcNAc...) asparagine glycans are attached at residues Asn-32 and Asn-332. Cys-453 is a binding site for heme.

Belongs to the cytochrome P450 family. Heme is required as a cofactor.

It localises to the endoplasmic reticulum membrane. The enzyme catalyses a 14alpha-methyl steroid + 3 reduced [NADPH--hemoprotein reductase] + 3 O2 = a Delta(14) steroid + formate + 3 oxidized [NADPH--hemoprotein reductase] + 4 H2O + 4 H(+). It catalyses the reaction a 14alpha-methyl steroid + reduced [NADPH--hemoprotein reductase] + O2 = a 14alpha-hydroxymethyl steroid + oxidized [NADPH--hemoprotein reductase] + H2O + H(+). It carries out the reaction a 14alpha-hydroxymethyl steroid + reduced [NADPH--hemoprotein reductase] + O2 = a 14alpha-formyl steroid + oxidized [NADPH--hemoprotein reductase] + 2 H2O + H(+). The catalysed reaction is a 14alpha-formyl steroid + reduced [NADPH--hemoprotein reductase] + O2 = a Delta(14) steroid + formate + oxidized [NADPH--hemoprotein reductase] + H2O + 2 H(+). The enzyme catalyses lanosterol + 3 reduced [NADPH--hemoprotein reductase] + 3 O2 = 4,4-dimethyl-5alpha-cholesta-8,14,24-trien-3beta-ol + formate + 3 oxidized [NADPH--hemoprotein reductase] + 4 H2O + 4 H(+). It catalyses the reaction lanosterol + reduced [NADPH--hemoprotein reductase] + O2 = 32-hydroxylanosterol + oxidized [NADPH--hemoprotein reductase] + H2O + H(+). It carries out the reaction 32-hydroxylanosterol + reduced [NADPH--hemoprotein reductase] + O2 = 32-oxolanosterol + oxidized [NADPH--hemoprotein reductase] + 2 H2O + H(+). The catalysed reaction is 32-oxolanosterol + reduced [NADPH--hemoprotein reductase] + O2 = 4,4-dimethyl-5alpha-cholesta-8,14,24-trien-3beta-ol + formate + oxidized [NADPH--hemoprotein reductase] + H2O + 2 H(+). The enzyme catalyses eburicol + 3 reduced [NADPH--hemoprotein reductase] + 3 O2 = 14-demethyleburicol + formate + 3 oxidized [NADPH--hemoprotein reductase] + 4 H2O + 4 H(+). It catalyses the reaction eburicol + reduced [NADPH--hemoprotein reductase] + O2 = 32-hydroxyeburicol + oxidized [NADPH--hemoprotein reductase] + H2O + H(+). It carries out the reaction 32-hydroxyeburicol + reduced [NADPH--hemoprotein reductase] + O2 = 32-oxoeburicol + oxidized [NADPH--hemoprotein reductase] + 2 H2O + H(+). The catalysed reaction is 32-oxoeburicol + reduced [NADPH--hemoprotein reductase] + O2 = 14-demethyleburicol + formate + oxidized [NADPH--hemoprotein reductase] + H2O + 2 H(+). It functions in the pathway steroid biosynthesis; sterol biosynthesis. Its function is as follows. Sterol 14alpha-demethylase, encoded by cyp51A, cyp51B and cyp51C, that plays a critical role in the third module of ergosterol biosynthesis pathway, being ergosterol the major sterol component in fungal membranes that participates in a variety of functions. The third module or late pathway involves the ergosterol synthesis itself through consecutive reactions that mainly occur in the endoplasmic reticulum (ER) membrane. In filamentous fungi, during the initial step of this module, lanosterol (lanosta-8,24-dien-3beta-ol) can be metabolized to eburicol. Sterol 14alpha-demethylase catalyzes the three-step oxidative removal of the 14alpha-methyl group (C-32) of both these sterols in the form of formate, and converts eburicol and lanosterol to 14-demethyleburicol (4,4,24-trimethylergosta-8,14,24(28)-trienol) and 4,4-dimethyl-5alpha-cholesta-8,14,24-trien-3beta-ol, respectively, which are further metabolized by other enzymes in the pathway to ergosterol. Can also use substrates not intrinsic to fungi, such as 24,25-dihydrolanosterol (DHL), producing 4,4'-dimethyl-8,14-cholestadien-3-beta-ol, but at lower rates than the endogenous substrates. In terms of biological role, as a target of azole drugs, plays a crucial role in azole drug susceptibility. This Aspergillus flavus (strain ATCC 200026 / FGSC A1120 / IAM 13836 / NRRL 3357 / JCM 12722 / SRRC 167) protein is Sterol 14-alpha demethylase.